We begin with the raw amino-acid sequence, 54 residues long: ISINQDLKAITDMLLTEQIQARQRCLAALRQRLLDLDSDVSLFNGDLLPNGRCS.

A disulfide bond links Cys-25 and Cys-53. The residue at position 36 (Leu-36) is a Leucine amide.

This sequence belongs to the molluscan ELH family. This protein consists of a large 36-residue subunit, bound by a single disulfide-bond to a small 18-residue subunit.

It localises to the secreted. Injected in sexually mature animals califin B excites LB and LC cells of the abdominal ganglion and cause egg-laying. The sequence is that of Califin-B from Aplysia californica (California sea hare).